The sequence spans 233 residues: Phosphatidylserine decarboxylase proenzyme (233 aa).

Ser190 functions as the Schiff-base intermediate with substrate; via pyruvic acid in the catalytic mechanism. The residue at position 190 (Ser190) is a Pyruvic acid (Ser); by autocatalysis.

Belongs to the phosphatidylserine decarboxylase family. PSD-A subfamily. As to quaternary structure, heterodimer of a large membrane-associated beta subunit and a small pyruvoyl-containing alpha subunit. Requires pyruvate as cofactor. Post-translationally, is synthesized initially as an inactive proenzyme. Formation of the active enzyme involves a self-maturation process in which the active site pyruvoyl group is generated from an internal serine residue via an autocatalytic post-translational modification. Two non-identical subunits are generated from the proenzyme in this reaction, and the pyruvate is formed at the N-terminus of the alpha chain, which is derived from the carboxyl end of the proenzyme. The post-translation cleavage follows an unusual pathway, termed non-hydrolytic serinolysis, in which the side chain hydroxyl group of the serine supplies its oxygen atom to form the C-terminus of the beta chain, while the remainder of the serine residue undergoes an oxidative deamination to produce ammonia and the pyruvoyl prosthetic group on the alpha chain.

Its subcellular location is the cell membrane. It catalyses the reaction a 1,2-diacyl-sn-glycero-3-phospho-L-serine + H(+) = a 1,2-diacyl-sn-glycero-3-phosphoethanolamine + CO2. Its pathway is phospholipid metabolism; phosphatidylethanolamine biosynthesis; phosphatidylethanolamine from CDP-diacylglycerol: step 2/2. Catalyzes the formation of phosphatidylethanolamine (PtdEtn) from phosphatidylserine (PtdSer). This chain is Phosphatidylserine decarboxylase proenzyme, found in Bartonella quintana (strain Toulouse) (Rochalimaea quintana).